The following is a 355-amino-acid chain: Proto-oncogene Wnt-3 (355 aa).

A signal peptide spans 1–21 (MEPHLLGLLLGLLLGGTRVLA). Disulfide bonds link C80/C91, C131/C139, C141/C158, C206/C220, C208/C215, C284/C315, C300/C310, C314/C354, C330/C345, C332/C342, and C337/C338. An N-linked (GlcNAc...) asparagine glycan is attached at N90. Residue S212 is the site of O-palmitoleoyl serine; by PORCN attachment. N301 is a glycosylation site (N-linked (GlcNAc...) asparagine).

It belongs to the Wnt family. Forms a soluble 1:1 complex with AFM; this prevents oligomerization and is required for prolonged biological activity. The complex with AFM may represent the physiological form in body fluids. Interacts with PORCN. Interacts with WLS. Post-translationally, palmitoleoylation is required for efficient binding to frizzled receptors. Depalmitoleoylation leads to Wnt signaling pathway inhibition.

The protein resides in the secreted. It localises to the extracellular space. The protein localises to the extracellular matrix. Functionally, ligand for members of the frizzled family of seven transmembrane receptors. Functions in the canonical Wnt signaling pathway that results in activation of transcription factors of the TCF/LEF family. Required for normal gastrulation, formation of the primitive streak, and for the formation of the mesoderm during early embryogenesis. Required for normal formation of the apical ectodermal ridge. Required for normal embryonic development, and especially for limb development. This Homo sapiens (Human) protein is Proto-oncogene Wnt-3 (WNT3).